The following is a 3023-amino-acid chain: Genome polyprotein (3023 aa).

Residues 1–21 (MSTLPKPKRQTKRNTLRRPKN) are compositionally biased toward basic residues. Ser2 carries the N-acetylserine; by host modification. The segment at 2–23 (STLPKPKRQTKRNTLRRPKNVK) is interaction with STAT1. The interval 2–58 (STLPKPKRQTKRNTLRRPKNVKFPAGGQIVGEVYVLPRRGPQLGVREVRKTSERSQP) is interaction with EIF2AK2/PKR. The interaction with DDX3X stretch occupies residues 2-59 (STLPKPKRQTKRNTLRRPKNVKFPAGGQIVGEVYVLPRRGPQLGVREVRKTSERSQPR). Residues 2–75 (STLPKPKRQT…PKARPREGRS (74 aa)) are disordered. Topologically, residues 2-168 (STLPKPKRQT…EDGVNYATGN (167 aa)) are cytoplasmic. 2 consecutive short sequence motifs (nuclear localization signal) follow at residues 5–13 (PKPKRQTKR) and 38–43 (PRRGPQ). A compositionally biased stretch (basic and acidic residues) spans 47-57 (REVRKTSERSQ). At Ser53 the chain carries Phosphoserine; by host. 2 consecutive short sequence motifs (nuclear localization signal) follow at residues 58-64 (PRGRRQP) and 66-71 (PKARPR). The important for endoplasmic reticulum and mitochondrial localization stretch occupies residues 112–152 (PRRRSRNLGKVIDTLTCGFADLMGYIPLIGAPVGGVARALA). Ser116 carries the post-translational modification Phosphoserine; by host. The interval 122–173 (VIDTLTCGFADLMGYIPLIGAPVGGVARALAHGVRALEDGVNYATGNLPGCS) is interaction with APOA2. Positions 164 to 167 (YATG) are important for lipid droplets localization. Residues 169 to 189 (LPGCSFSIFLLALFSCLTCPA) form a helical membrane-spanning segment. Positions 178–191 (LLALFSCLTCPASS) are cleaved as a propeptide — ER anchor for the core protein, removed in mature form by host signal peptidase. Over 190 to 359 (SSLEYRNASG…VGAHWGVMAG (170 aa)) the chain is Lumenal. 3 N-linked (GlcNAc...) asparagine; by host glycosylation sites follow: Asn196, Asn209, and Asn235. The tract at residues 266-297 (LVAPPTLCSALYVEDAFGAVSLVGQAFTFRPR) is important for fusion. A glycan (N-linked (GlcNAc...) asparagine; by host) is linked at Asn306. Residues 360–380 (LAYFSMQGNWAKVVIVLIMFS) traverse the membrane as a helical segment. Residues 381 to 733 (GVDATTHTTG…WEFVVLVFLL (353 aa)) are Lumenal-facing. Positions 386–413 (THTTGGSAAQATAGFTSFFTRGPSQNLQ) are HVR1. Residues Asn418, Asn424, and Asn431 are each glycosylated (N-linked (GlcNAc...) (high mannose) asparagine; by host). Disulfide bonds link Cys430-Cys554, Cys453-Cys460, Cys488-Cys496, and Cys505-Cys510. A glycan (N-linked (GlcNAc...) asparagine; by host) is linked at Asn449. Residues 476–480 (ANING) are HVR2. Asn477 carries N-linked (GlcNAc...) asparagine; by host glycosylation. The interval 482–495 (SEDRPYCWHYPPRP) is CD81-binding 1. Asn534 is a glycosylation site (N-linked (GlcNAc...) asparagine; by host). The tract at residues 546 to 553 (PPQGRWFG) is CD81-binding 2. The N-linked (GlcNAc...) asparagine; by host glycan is linked to Asn558. Cystine bridges form between Cys566-Cys571, Cys589-Cys593, Cys605-Cys628, and Cys615-Cys652. N-linked (GlcNAc...) (high mannose) asparagine; by host glycosylation is found at Asn631 and Asn653. Cys660 and Cys685 are disulfide-bonded. Positions 668–679 (SEQQPLLHSTTD) are PKR/eIF2-alpha phosphorylation homology domain (PePHD). The helical transmembrane segment at 734–754 (LADARVCVALWMMLLISQAEA) threads the bilayer. Residues 755-765 (AMENLVMLNAL) are Lumenal-facing. A helical transmembrane segment spans residues 766–786 (SAAGQQGYVWYLVAFCAAWHI). Residues 787 to 790 (RGKL) are Cytoplasmic-facing. The chain crosses the membrane as a helical span at residues 791–811 (VPLITYGLTGLWPLALLDLLL). At 812 to 821 (PQRAYAWTGE) the chain is on the lumenal side. A helical transmembrane segment spans residues 822-842 (DDATIGAGVLLLLGFFTLSPW). The Cytoplasmic segment spans residues 843–889 (YKHWIGRLIWWNQYAICRGEAALQVWVPPLLVRGSRDSVILLASLLY). The helical transmembrane segment at 890–910 (PSLIFDITKLLIAVLGPLYLI) threads the bilayer. The 128-residue stretch at 907-1034 (LYLIQAALTS…DYKKMGWRLL (128 aa)) folds into the Peptidase C18 domain. Topologically, residues 911–936 (QAALTSTPYFVRAHVLIRICMLVRSA) are lumenal. Residues 912 to 1214 (AALTSTPYFV…PVETLSTQVR (303 aa)) form a protease NS2-3 region. A lipid anchor (S-palmitoyl cysteine; by host) is attached at Cys930. A helical membrane pass occupies residues 937–957 (MGGKYVQMAVLTVGRWFNTYL). Residues 937–957 (MGGKYVQMAVLTVGRWFNTYL) are interaction with host SCPS1. Residues 958–1665 (YDHLSPIQDW…CMSADLEVTT (708 aa)) are Cytoplasmic-facing. Active-site for protease NS2 activity; shared with dimeric partner residues include His960, Glu980, and Cys1001. In terms of domain architecture, Peptidase S29 spans 1035 to 1216 (SPISAYAQQT…ETLSTQVRSP (182 aa)). Residues His1091 and Asp1115 each act as charge relay system; for serine protease NS3 activity in the active site. Zn(2+)-binding residues include Cys1131 and Cys1133. Ser1173 (charge relay system; for serine protease NS3 activity) is an active-site residue. Residues Cys1179 and His1183 each contribute to the Zn(2+) site. In terms of domain architecture, Helicase ATP-binding spans 1225 to 1377 (PAVPESYQVG…PNIEEVGLTS (153 aa)). An ATP-binding site is contributed by 1238-1245 (APTGSGKS). Ser1245 and Glu1325 together coordinate Mg(2+). The DECH box signature appears at 1324-1327 (DECH). In terms of domain architecture, Helicase C-terminal spans 1387–1546 (ALPLAMIKGG…DLQPAETTVR (160 aa)). The segment at 1494-1506 (QRRGRTGRGRPGI) is RNA-binding. A helical membrane pass occupies residues 1666–1686 (SAWVLVGGVLAALAAYCLSVG). The interval 1687-1698 (CVVIVGHIELGG) is NS3-binding. Residues 1687–1813 (CVVIVGHIEL…SVTSPLTTNQ (127 aa)) lie on the Cytoplasmic side of the membrane. The helical transmembrane segment at 1814–1834 (TMFFNILGGWVATHLAGPAAS) threads the bilayer. Residues 1835-1836 (SA) lie on the Lumenal side of the membrane. A helical membrane pass occupies residues 1837-1857 (FVVSGLAGAAVGGIGIGRVLL). Residue Asp1858 is a topological domain, cytoplasmic. Residues 1859-1879 (VLAGYGAGVSGALVAFKIMGG) traverse the membrane as a helical segment. At 1880 to 1889 (ELPTTEDMVN) the chain is on the lumenal side. A helical transmembrane segment spans residues 1890–1910 (LLPAILSPGALVVGVICAAVL). Residues 1911–1980 (RRHVGPGEGA…WINEDYPSPC (70 aa)) lie on the Cytoplasmic side of the membrane. A lipid anchor (S-palmitoyl cysteine; by host) is attached at Cys1980. An intramembrane segment occupies 1981 to 2010 (NGDWLHDIWDWVCIVLSDFKTWLSAKIMPK). Over 2011 to 3002 (VPGIPFLSCQ…YHSVSRARTR (992 aa)) the chain is Cytoplasmic. Zn(2+) contacts are provided by Cys2019, Cys2037, Cys2039, and Cys2060. An FKBP8-binding region spans residues 2128-2216 (EFFTELDGVR…ASSSASQLSA (89 aa)). The transcriptional activation stretch occupies residues 2128–2340 (EFFTELDGVR…PVPPPRRKRT (213 aa)). The interval 2143-2147 (PPCKP) is interaction with non-structural protein 4A. Residues 2195-2218 (ARRLARGSPPSEASSSASQLSAPS) show a composition bias toward low complexity. A disordered region spans residues 2195 to 2226 (ARRLARGSPPSEASSSASQLSAPSLKATCQTH). Positions 2197 to 2450 (RLARGSPPSE…AIITPCSAEE (254 aa)) are interaction with host SKP2. Phosphoserine; by host is present on residues Ser2202, Ser2205, Ser2209, Ser2212, Ser2215, and Ser2218. The tract at residues 2218 to 2257 (SLKATCQTHRPHPDAELIDANLLWRQEMGSNITRVESETK) is ISDR. Residues 2218–2283 (SLKATCQTHR…TELSIPAECF (66 aa)) form an interaction with EIF2AK2/PKR region. The NS4B-binding stretch occupies residues 2257–2314 (KVVILDSFEPLRAEEDDTELSIPAECFKKPPKYPPALPIWARPDYNPPLLPSWKDPTY). The interval 2307 to 2385 (PSWKDPTYEP…GTESTAESGD (79 aa)) is V3. Disordered stretches follow at residues 2320–2344 (HGCALPPTRPAPVPPPRRKRTIKLD) and 2357–2422 (ERSF…STVS). Positions 2330–2333 (APVP) match the SH3-binding motif. The short motif at 2335 to 2343 (PRRKRTIKL) is the Nuclear localization signal element. Residues 2366 to 2384 (EGTGTSSSGVGTESTAESG) are compositionally biased toward low complexity. Phosphoserine; by host occurs at positions 2461 and 2474. Residues 2646-2764 (PLGFSYDTRC…ISESCGVEED (119 aa)) enclose the RdRp catalytic domain. The Mg(2+) site is built by Asp2652, Asp2750, and Asp2751. The helical transmembrane segment at 3003 to 3023 (HLLLCLLLLTVGVGIFLLPAR) threads the bilayer.

This sequence belongs to the hepacivirus polyprotein family. As to quaternary structure, homooligomer. Interacts with E1 (via C-terminus). Interacts with the non-structural protein 5A. Interacts (via N-terminus) with host STAT1 (via SH2 domain); this interaction results in decreased STAT1 phosphorylation and ubiquitin-mediated proteasome-dependent STAT1 degradation, leading to decreased IFN-stimulated gene transcription. Interacts with host STAT3; this interaction constitutively activates STAT3. Interacts with host LTBR receptor. Interacts with host TNFRSF1A receptor and possibly induces apoptosis. Interacts with host HNRPK. Interacts with host YWHAE. Interacts with host UBE3A/E6AP. Interacts with host DDX3X. Interacts with host APOA2. Interacts with host RXRA protein. Interacts with host SP110 isoform 3/Sp110b; this interaction sequesters the transcriptional corepressor SP110 away from the nucleus. Interacts with host CREB3 nuclear transcription protein; this interaction triggers cell transformation. Interacts with host ACY3. Interacts with host C1QR1. Interacts with host RBM24; this interaction, which enhances the interaction of the mature core protein with 5'-UTR, may inhibit viral translation and favor replication. Interacts with host EIF2AK2/PKR; this interaction induces the autophosphorylation of EIF2AK2. Part of the viral assembly initiation complex composed of NS2, E1, E2, NS3, NS4A, NS5A and the mature core protein. In terms of assembly, forms a heterodimer with envelope glycoprotein E2. Interacts with mature core protein. Interacts with protease NS2. The heterodimer E1/E2 interacts with host CLDN1; this interaction plays a role in viral entry into host cell. Interacts with host SPSB2 (via C-terminus). Part of the viral assembly initiation complex composed of NS2, E1, E2, NS3, NS4A, NS5A and the mature core protein. Interacts with host NEURL3; this interaction prevents E1 binding to glycoprotein E2. Forms a heterodimer with envelope glycoprotein E1. Interacts with host CD81 and SCARB1 receptors; these interactions play a role in viral entry into host cell. Interacts with host EIF2AK2/PKR; this interaction inhibits EIF2AK2 and probably allows the virus to evade the innate immune response. Interacts with host CD209/DC-SIGN and CLEC4M/DC-SIGNR. Interact with host SPCS1; this interaction is essential for viral particle assembly. Interacts with protease NS2. The heterodimer E1/E2 interacts with host CLDN1; this interaction plays a role in viral entry into host cell. Part of the viral assembly initiation complex composed of NS2, E1, E2, NS3, NS4A, NS5A and the mature core protein. Interacts with host SLC3A2/4F2hc; the interaction may facilitate viral entry into host cell. Interacts with human PLSCR1. As to quaternary structure, homohexamer. Homoheptamer. Interacts with protease NS2. In terms of assembly, homodimer. Interacts with host SPCS1; this interaction is essential for viral particle assembly. Interacts with envelope glycoprotein E1. Interacts with envelope glycoprotein E2. Interacts with viroporin p7. Interacts with serine protease/helicase NS3. Part of the replication complex composed of NS2, NS3, NS4A, NS4B, NS5A and the RNA-directed RNA polymerase embedded in an ER-derived membranous web. Part of the viral assembly initiation complex composed of NS2, E1, E2, NS3, NS4A, NS5A and the mature core protein. Interacts with protease NS2. Interacts with non-structural protein 4A; this interaction stabilizes the folding of NS3 serine protease. NS3-NS4A interaction is essential for NS3 activation and allows membrane anchorage of the latter. NS3/NS4A complex also prevents phosphorylation of host IRF3, thus preventing the establishment of dsRNA induced antiviral state. Interacts with host MAVS; this interaction leads to the cleavage and inhibition of host MAVS. Interacts with host TICAM1; this interaction leads to the cleavage and inhibition of host TICAM1. Interacts with host TANK-binding kinase/TBK1; this interaction results in the inhibition of the association between TBK1 and IRF3, which leads to the inhibition of IRF3 activation. Interacts with host RBM24. Part of the replication complex composed of NS2, NS3, NS4A, NS4B, NS5A and the RNA-directed RNA polymerase embedded in an ER-derived membranous web. Part of the viral assembly initiation complex composed of NS2, E1, E2, NS3, NS4A, NS5A and the mature core protein. As to quaternary structure, interacts with NS3 serine protease; this interaction stabilizes the folding of NS3 serine protease. NS3-NS4A interaction is essential for NS3 activation and allows membrane anchorage of the latter. Interacts with non-structural protein 5A (via N-terminus). Part of the replication complex composed of NS2, NS3, NS4A, NS4B, NS5A and the RNA-directed RNA polymerase embedded in an ER-derived membranous web. Part of the viral assembly initiation complex composed of NS2, E1, E2, NS3, NS4A, NS5A and the mature core protein. In terms of assembly, homomultimer. Interacts with non-structural protein NS5A. Interacts with host PLA2G4C; this interaction likely initiates the recruitment of replication complexes to lipid droplets. Interacts with host STING; this interaction disrupts the interaction between STING and TBK1 thereby suppressing the interferon signaling. Part of the replication complex composed of NS2, NS3, NS4A, NS4B, NS5A and the RNA-directed RNA polymerase embedded in an ER-derived membranous web. Monomer. Homodimer; dimerization is required for RNA-binding. Interacts with the mature core protein. Interacts (via N-terminus) with non-structural protein 4A. Interacts with non-structural protein 4B. Interacts (via region D2) with RNA-directed RNA polymerase. Part of the viral assembly initiation complex composed of NS2, E1, E2, NS3, NS4A, NS5A and the mature core protein. Part of the replication complex composed of NS2, NS3, NS4A, NS4B, NS5A and the RNA-directed RNA polymerase embedded in an ER-derived membranous web. Interacts with host GRB2. Interacts with host BIN1. Interacts with host PIK3R1. Interacts with host SRCAP. Interacts with host FKBP8. Interacts (via C-terminus) with host VAPB (via MSP domain). Interacts with host EIF2AK2/PKR; this interaction leads to disruption of EIF2AK2 dimerization by NS5A and probably allows the virus to evade the innate immune response. Interacts (via N-terminus) with host PACSIN2 (via N-terminus); this interaction attenuates protein kinase C alpha-mediated phosphorylation of PACSIN2 by disrupting the interaction between PACSIN2 and PRKCA. Interacts (via N-terminus) with host SRC kinase (via SH2 domain). Interacts with most Src-family kinases. Interacts with host IFI27 and SKP2; promotes the ubiquitin-mediated proteasomal degradation of NS5A. Interacts with host GPS2. Interacts with host TNFRSF21; this interaction allows the modulation by the virus of JNK, p38 MAPK, STAT3, and Akt signaling pathways in a DR6-dependent manner. Interacts (via N-terminus) with host CIDEB (via N-terminus); this interaction seems to regulate the association of HCV particles with APOE. Interacts with host CHKA/Choline Kinase-alpha; CHKA bridges host PI4KA and NS5A and potentiates NS5A-stimulated PI4KA activity, which then facilitates the targeting of the ternary complex to the ER for viral replication. Interacts with host SPSB2 (via C-terminus); this interaction targets NS5A for ubiquitination and degradation. Interacts with host RAB18; this interaction may promote the association of NS5A and other replicase components with lipid droplets. Interacts (via region D2) with host PPIA/CYPA; the interaction stimulates RNA-binding ability of NS5A and is dependent on the peptidyl-prolyl cis-trans isomerase activity of PPIA/CYPA. Interacts with host TRIM14; this interaction induces the degradation of NS5A. As to quaternary structure, homooligomer. Interacts with non-structural protein 5A. Interacts with host VAPB. Interacts with host PRK2/PKN2. Interacts with host HNRNPA1 and SEPT6; these interactions facilitate viral replication. Part of the replication complex composed of NS2, NS3, NS4A, NS4B, NS5A and the RNA-directed RNA polymerase. Zn(2+) is required as a cofactor. Mg(2+) serves as cofactor. In terms of processing, specific enzymatic cleavages in vivo yield mature proteins. The structural proteins, core, E1, E2 and p7 are produced by proteolytic processing by host signal peptidases. The core protein precursor is synthesized as a 23 kDa, which is retained in the ER membrane through the hydrophobic signal peptide. Cleavage by the signal peptidase releases the 21 kDa mature core protein. The cleavage of the core protein precursor occurs between aminoacids 176 and 188 but the exact cleavage site is not known. Some degraded forms of the core protein appear as well during the course of infection. The other proteins (p7, NS2, NS3, NS4A, NS4B, NS5A and NS5B) are cleaved by the viral proteases. Autoprocessing between NS2 and NS3 is mediated by the NS2 cysteine protease catalytic domain and regulated by the NS3 N-terminal domain. Phosphorylated by host PKC and PKA. Post-translationally, ubiquitinated; mediated by UBE3A and leading to core protein subsequent proteasomal degradation. In terms of processing, highly N-glycosylated. Palmitoylation is required for NS2/3 autoprocessing and E2 recruitment to membranes. Post-translationally, palmitoylated. This modification may play a role in its polymerization or in protein-protein interactions. In terms of processing, phosphorylated on serines in a basal form termed p56. p58 is a hyperphosphorylated form of p56. p56 and p58 coexist in the cell in roughly equivalent amounts. Hyperphosphorylation is dependent on the presence of NS4A. Host CSNK1A1/CKI-alpha or RPS6KB1 kinases may be responsible for NS5A phosphorylation. Tyrosine phosphorylation is essential for the interaction with host SRC. Post-translationally, the N-terminus is phosphorylated by host PRK2/PKN2.

It localises to the host endoplasmic reticulum membrane. It is found in the host mitochondrion membrane. Its subcellular location is the virion. The protein localises to the host cytoplasm. The protein resides in the host nucleus. It localises to the host lipid droplet. It is found in the virion membrane. Its subcellular location is the host mitochondrion. The protein localises to the host cell membrane. The protein resides in the host perinuclear region. It catalyses the reaction Hydrolysis of four peptide bonds in the viral precursor polyprotein, commonly with Asp or Glu in the P6 position, Cys or Thr in P1 and Ser or Ala in P1'.. The enzyme catalyses a ribonucleoside 5'-triphosphate + H2O = a ribonucleoside 5'-diphosphate + phosphate + H(+). It carries out the reaction ATP + H2O = ADP + phosphate + H(+). The catalysed reaction is RNA(n) + a ribonucleoside 5'-triphosphate = RNA(n+1) + diphosphate. With respect to regulation, inhibited by the antiviral drug hexamethylene amiloride. Inhibition by amantadine appears to be genotype-dependent. Also inhibited by long-alkyl-chain iminosugar derivatives. Its activity is regulated as follows. Activity is up-regulated by PRK2/PKN2-mediated phosphorylation. Functionally, packages viral RNA to form a viral nucleocapsid, and promotes virion budding. Participates in the viral particle production as a result of its interaction with the non-structural protein 5A. Binds RNA and may function as a RNA chaperone to induce the RNA structural rearrangements taking place during virus replication. Modulates viral translation initiation by interacting with viral IRES and 40S ribosomal subunit. Affects various cell signaling pathways, host immunity and lipid metabolism. Prevents the establishment of cellular antiviral state by blocking the interferon-alpha/beta (IFN-alpha/beta) and IFN-gamma signaling pathways and by blocking the formation of phosphorylated STAT1 and promoting ubiquitin-mediated proteasome-dependent degradation of STAT1. Activates STAT3 leading to cellular transformation. Regulates the activity of cellular genes, including c-myc and c-fos. May repress the promoter of p53, and sequester CREB3 and SP110 isoform 3/Sp110b in the cytoplasm. Represses cell cycle negative regulating factor CDKN1A, thereby interrupting an important check point of normal cell cycle regulation. Targets transcription factors involved in the regulation of inflammatory responses and in the immune response: suppresses TNF-induced NF-kappa-B activation, and activates AP-1. Binds to dendritic cells (DCs) via C1QR1, resulting in down-regulation of T-lymphocytes proliferation. Alters lipid metabolism by interacting with hepatocellular proteins involved in lipid accumulation and storage. Induces up-regulation of FAS promoter activity, and thereby contributes to the increased triglyceride accumulation in hepatocytes (steatosis). In terms of biological role, forms a heterodimer with envelope glycoprotein E2, which mediates virus attachment to the host cell, virion internalization through clathrin-dependent endocytosis and fusion with host membrane. Fusion with the host cell is most likely mediated by both E1 and E2, through conformational rearrangements of the heterodimer required for fusion rather than a classical class II fusion mechanism. E1/E2 heterodimer binds host apolipoproteins such as APOB and ApoE thereby forming a lipo-viro-particle (LVP). APOE associated to the LVP allows the initial virus attachment to cell surface receptors such as the heparan sulfate proteoglycans (HSPGs), syndecan-1 (SDC1), syndecan-1 (SDC2), the low-density lipoprotein receptor (LDLR) and scavenger receptor class B type I (SCARB1). The cholesterol transfer activity of SCARB1 allows E2 exposure and binding of E2 to SCARB1 and the tetraspanin CD81. E1/E2 heterodimer binding on CD81 activates the epithelial growth factor receptor (EGFR) signaling pathway. Diffusion of the complex E1-E2-EGFR-SCARB1-CD81 to the cell lateral membrane allows further interaction with Claudin 1 (CLDN1) and occludin (OCLN) to finally trigger HCV entry. Its function is as follows. Forms a heterodimer with envelope glycoprotein E1, which mediates virus attachment to the host cell, virion internalization through clathrin-dependent endocytosis and fusion with host membrane. Fusion with the host cell is most likely mediated by both E1 and E2, through conformational rearrangements of the heterodimer required for fusion rather than a classical class II fusion mechanism. The interaction between envelope glycoprotein E2 and host apolipoprotein E/APOE allows the proper assembly, maturation and infectivity of the viral particles. This interaction is probably promoted via the up-regulation of cellular autophagy by the virus. E1/E2 heterodimer binds host apolipoproteins such as APOB and APOE thereby forming a lipo-viro-particle (LVP). APOE associated to the LVP allows the initial virus attachment to cell surface receptors such as the heparan sulfate proteoglycans (HSPGs), syndecan-1 (SDC1), syndecan-1 (SDC2), the low-density lipoprotein receptor (LDLR) and scavenger receptor class B type I (SCARB1). The cholesterol transfer activity of SCARB1 allows E2 exposure and binding of E2 to SCARB1 and the tetraspanin CD81. E1/E2 heterodimer binding on CD81 activates the epithelial growth factor receptor (EGFR) signaling pathway. Diffusion of the complex E1-E2-EGFR-SCARB1-CD81 to the cell lateral membrane allows further interaction with Claudin 1 (CLDN1) and occludin (OCLN) to finally trigger HCV entry. Inhibits host EIF2AK2/PKR activation, preventing the establishment of an antiviral state. Viral ligand for CD209/DC-SIGN and CLEC4M/DC-SIGNR, which are respectively found on dendritic cells (DCs), and on liver sinusoidal endothelial cells and macrophage-like cells of lymph node sinuses. These interactions allow the capture of circulating HCV particles by these cells and subsequent facilitated transmission to permissive cells such as hepatocytes and lymphocyte subpopulations. The interaction between E2 and host amino acid transporter complex formed by SLC3A2 and SLC7A5/LAT1 may facilitate viral entry into host cell. Ion channel protein that acts as a viroporin and plays an essential role in the assembly, envelopment and secretion of viral particles. Regulates the host cell secretory pathway, which induces the intracellular retention of viral glycoproteins and favors assembly of viral particles. Creates a pore in acidic organelles and releases Ca(2+) and H(+) in the cytoplasm of infected cells, leading to a productive viral infection. High levels of cytoplasmic Ca(2+) may trigger membrane trafficking and transport of viral ER-associated proteins to viroplasms, sites of viral genome replication. This ionic imbalance induces the assembly of the inflammasome complex, which triggers the maturation of pro-IL-1beta into IL-1beta through the action of caspase-1. Targets also host mitochondria and induces mitochondrial depolarization. In addition of its role as a viroporin, acts as a lipid raft adhesion factor. Functionally, cysteine protease required for the proteolytic auto-cleavage between the non-structural proteins NS2 and NS3. The N-terminus of NS3 is required for the function of NS2 protease (active region NS2-3). Promotes the initiation of viral particle assembly by mediating the interaction between structural and non-structural proteins. In terms of biological role, displays three enzymatic activities: serine protease with a chymotrypsin-like fold, NTPase and RNA helicase. NS3 serine protease, in association with NS4A, is responsible for the cleavages of NS3-NS4A, NS4A-NS4B, NS4B-NS5A and NS5A-NS5B. The NS3/NS4A complex prevents phosphorylation of host IRF3, thus preventing the establishment of dsRNA induced antiviral state. The NS3/NS4A complex induces host amino acid transporter component SLC3A2, thus contributing to HCV propagation. NS3 RNA helicase binds to RNA and unwinds both dsDNA and dsRNA in the 3' to 5' direction, and likely resolves RNA complicated stable secondary structures in the template strand. Binds a single ATP and catalyzes the unzipping of a single base pair of dsRNA. Inhibits host antiviral proteins TBK1 and IRF3 thereby preventing the establishment of an antiviral state. Cleaves host MAVS/CARDIF thereby preventing the establishment of an antiviral state. Cleaves host TICAM1/TRIF, thereby disrupting TLR3 signaling and preventing the establishment of an antiviral state. Its function is as follows. Peptide cofactor which forms a non-covalent complex with the N-terminal of NS3 serine protease. The NS3/NS4A complex prevents phosphorylation of host IRF3, thus preventing the establishment of dsRNA induced antiviral state. The NS3/NS4A complex induces host amino acid transporter component SLC3A2, thus contributing to HCV propagation. Induces a specific membrane alteration that serves as a scaffold for the virus replication complex. This membrane alteration gives rise to the so-called ER-derived membranous web that contains the replication complex. NS4B self-interaction contributes to its function in membranous web formation. Promotes host TRIF protein degradation in a CASP8-dependent manner thereby inhibiting host TLR3-mediated interferon signaling. Disrupts the interaction between STING and TBK1 contributing to the inhibition of interferon signaling. Functionally, phosphorylated protein that is indispensable for viral replication and assembly. Both hypo- and hyperphosphorylated states are required for the viral life cycle. The hyperphosphorylated form of NS5A is an inhibitor of viral replication. Involved in RNA-binding and especially in binding to the viral genome. Zinc is essential for RNA-binding. Participates in the viral particle production as a result of its interaction with the mature viral core protein. Its interaction with host VAPB may target the viral replication complex to vesicles. Down-regulates viral IRES translation initiation. Mediates interferon resistance, presumably by interacting with and inhibiting host EIF2AK2/PKR. Prevents BIN1-induced apoptosis. Acts as a transcriptional activator of some host genes important for viral replication when localized in the nucleus. Via the interaction with host PACSIN2, modulates lipid droplet formation in order to promote virion assembly. Modulates TNFRSF21/DR6 signaling pathway for viral propagation. In terms of biological role, RNA-dependent RNA polymerase that performs primer-template recognition and RNA synthesis during viral replication. Initiates RNA transcription/replication at a flavin adenine dinucleotide (FAD), resulting in a 5'- FAD cap on viral RNAs. In this way, recognition of viral 5' RNA by host pattern recognition receptors can be bypassed, thereby evading activation of antiviral pathways. This Homo sapiens (Human) protein is Genome polyprotein.